The chain runs to 538 residues: uncharacterized protein (538 aa).

Disordered regions lie at residues 20 to 71 (RLSA…GGAQ), 151 to 211 (LWAE…EHPK), 288 to 331 (MLQP…QQHK), and 458 to 482 (EFEKASKLTGPGEASSGVGHSLKNY). A compositionally biased stretch (basic and acidic residues) spans 154–171 (ESEKSESKGTRRDFRSYD).

This is an uncharacterized protein from Homo sapiens (Human).